The chain runs to 628 residues: Very-long-chain aldehyde decarbonylase GL1-2 (628 aa).

5 helical membrane passes run 37 to 57, 131 to 151, 191 to 211, 299 to 319, and 331 to 351; these read GAAP…ARGL, GWAI…YWAH, VVIG…VGLV, DFVF…PFVL, and FVLL…WCCS. A Fatty acid hydroxylase domain is found at 137–277; that stretch reads LLHVLVAEPL…MPIFDLLGGT (141 aa).

The protein belongs to the sterol desaturase family. Homodimer.

It localises to the endoplasmic reticulum membrane. The enzyme catalyses a long-chain fatty aldehyde + 2 NADPH + O2 + H(+) = a long-chain alkane + formate + 2 NADP(+) + H2O. In terms of biological role, aldehyde decarbonylase involved in the conversion of aldehydes to alkanes. Core component of a very-long-chain alkane synthesis complex. This is Very-long-chain aldehyde decarbonylase GL1-2 from Oryza sativa subsp. indica (Rice).